A 163-amino-acid polypeptide reads, in one-letter code: Norbelladine synthase (163 aa).

68-71 serves as a coordination point for tyramine; sequence YHKE. Lysine 83 acts as the Proton donor in catalysis.

The protein belongs to the BetVI family. Mostly expressed in bulbs, and, to a lower extent, in roots, stems, leaves and flowers.

It carries out the reaction 3,4-dihydroxybenzaldehyde + tyramine + AH2 = norbelladine + A + H2O. It participates in alkaloid biosynthesis. In terms of biological role, catalyzes the condensation of tyramine and 3,4-dihydroxybenzaldehyde (3,4-DHBA) to form norbelladine, the common precursor to all Amaryllidaceae alkaloids such as galanthamine, lycorine and haemanthamine, and including haemanthamine- and crinamine-type alkaloids, promising anticancer agents. The polypeptide is Norbelladine synthase (Narcissus pseudonarcissus (Daffodil)).